Here is a 405-residue protein sequence, read N- to C-terminus: Protein PAG1 (405 aa).

The signal sequence occupies residues 1-50 (MVSLIILFRLTFAIANRVRTLMKVLVIVSFFVLTGSASADSGALSLSGAA). Residues Asn55, Asn104, Asn256, and Asn351 are each glycosylated (N-linked (GlcNAc...) asparagine). Residue Ala391 is the site of GPI-anchor amidated alanine attachment. Positions 392-405 (DSLRRTLALLFLLF) are cleaved as a propeptide — removed in mature form.

It is found in the cell membrane. This Trypanosoma brucei brucei protein is Protein PAG1 (PAG1).